A 414-amino-acid polypeptide reads, in one-letter code: Gamma-glutamyl phosphate reductase (414 aa).

The protein belongs to the gamma-glutamyl phosphate reductase family.

It is found in the cytoplasm. It carries out the reaction L-glutamate 5-semialdehyde + phosphate + NADP(+) = L-glutamyl 5-phosphate + NADPH + H(+). It participates in amino-acid biosynthesis; L-proline biosynthesis; L-glutamate 5-semialdehyde from L-glutamate: step 2/2. Catalyzes the NADPH-dependent reduction of L-glutamate 5-phosphate into L-glutamate 5-semialdehyde and phosphate. The product spontaneously undergoes cyclization to form 1-pyrroline-5-carboxylate. The chain is Gamma-glutamyl phosphate reductase from Thermoanaerobacter pseudethanolicus (strain ATCC 33223 / 39E) (Clostridium thermohydrosulfuricum).